The chain runs to 389 residues: Trans-2-enoyl-CoA reductase [NADH] (389 aa).

NAD(+) contacts are provided by residues 47–52 (GASTGY), 73–74 (FE), 110–111 (DA), and 138–139 (LA). Y224 lines the substrate pocket. The Proton donor role is filled by Y234. NAD(+) contacts are provided by residues K243 and 272–274 (LVT).

The protein belongs to the TER reductase family. Monomer.

The catalysed reaction is a 2,3-saturated acyl-CoA + NAD(+) = a (2E)-enoyl-CoA + NADH + H(+). It participates in lipid metabolism; fatty acid biosynthesis. In terms of biological role, involved in the fatty acid synthesis (FAS II). Catalyzes the reduction of a carbon-carbon double bond in an enoyl moiety that is covalently linked to a coenzyme A (CoA). This Clostridium perfringens (strain 13 / Type A) protein is Trans-2-enoyl-CoA reductase [NADH].